Reading from the N-terminus, the 514-residue chain is Peptide chain release factor 3 (514 aa).

A tr-type G domain is found at 8-268; the sequence is KKRRTFAIIS…TFLKFAPEPH (261 aa). GTP contacts are provided by residues 17 to 24, 85 to 89, and 139 to 142; these read SHPDAGKT, DTPGH, and NKLD.

Belongs to the TRAFAC class translation factor GTPase superfamily. Classic translation factor GTPase family. PrfC subfamily.

It is found in the cytoplasm. Increases the formation of ribosomal termination complexes and stimulates activities of RF-1 and RF-2. It binds guanine nucleotides and has strong preference for UGA stop codons. It may interact directly with the ribosome. The stimulation of RF-1 and RF-2 is significantly reduced by GTP and GDP, but not by GMP. The sequence is that of Peptide chain release factor 3 from Streptococcus sanguinis (strain SK36).